A 94-amino-acid chain; its full sequence is Large ribosomal subunit protein bL27 (94 aa).

The propeptide occupies 1 to 9 (MLKLNLQFF).

The protein belongs to the bacterial ribosomal protein bL27 family. The N-terminus is cleaved by ribosomal processing cysteine protease Prp.

This chain is Large ribosomal subunit protein bL27, found in Staphylococcus epidermidis (strain ATCC 35984 / DSM 28319 / BCRC 17069 / CCUG 31568 / BM 3577 / RP62A).